An 85-amino-acid chain; its full sequence is Large ribosomal subunit protein bL27 (85 aa).

Residues 1-23 are disordered; it reads MAHKKAGGSSRNGRDSESKRLGV.

This sequence belongs to the bacterial ribosomal protein bL27 family.

The chain is Large ribosomal subunit protein bL27 from Nitrosococcus oceani (strain ATCC 19707 / BCRC 17464 / JCM 30415 / NCIMB 11848 / C-107).